Consider the following 507-residue polypeptide: Phosphoprotein (507 aa).

The segment at 1-48 (MAEEQARHVKNGLECIRALKAEPIGSLAIEEAMAAWSEISDNPGQERA) is interaction with N0. Disordered regions lie at residues 41–99 (DNPG…PPRN), 134–163 (GLDG…TEGY), 201–231 (NNFP…IKKG), and 250–273 (GATQ…GNVP). At serine 86 the chain carries Phosphoserine. The segment covering 134–145 (GLDGDSTLSGGD) has biased composition (low complexity). Acidic residues predominate over residues 146–160 (NESENSDVDIGEPDT). Phosphoserine is present on serine 151. The segment covering 260–270 (SEPSGPGAPAG) has biased composition (low complexity). Residues 304 to 376 (GDYYDDELFS…LSSIMIAIPG (73 aa)) form a multimerization region. Interaction with the L polymerase stretches follow at residues 361 to 377 (STLE…IPGL) and 396 to 410 (PIIG…AEVL). The tract at residues 457 to 507 (GPASRSVIRSIIKSSRLEEDRKRYLMTLLDDIKGANDLAKFHQMLMKIIMK) is x domain (XD). The segment at 459–507 (ASRSVIRSIIKSSRLEEDRKRYLMTLLDDIKGANDLAKFHQMLMKIIMK) is interaction with the nucleocapsid (N-RNA).

Belongs to the morbillivirus P protein family. In terms of assembly, homotetramer. Interacts (via multimerization domain and XD domain) with polymerase L; this interaction forms the polymerase L-P complex. Interacts (via N-terminus) with N0 (via Ncore); this interaction allows P to chaperon N0 to avoid N polymerization and non-specific RNA binding before encapsidation. Interacts (via C-terminus) with N-RNA template (via Ntail); this interaction maintains the P/L complex anchored to the nucleocapsid template during the sequential transcription. Interacts (via C-terminus) with protein C this interaction allows C to associate with the ribonucleocapsid. In terms of processing, phosphorylation on serines by host CK2 is necessary for the formation of viral factories.

In terms of biological role, essential cofactor of the RNA polymerase L that plays a central role in the transcription and replication by forming the polymerase complex with RNA polymerase L and recruiting L to the genomic N-RNA template for RNA synthesis. Also plays a central role in the encapsidation of nascent RNA chains by forming the encapsidation complex with the nucleocapsid protein N (N-P complex). Acts as a chaperone for newly synthesized free N protein, so-called N0, allowing encapsidation of nascent RNA chains during replication. The nucleoprotein protein N prevents excessive phosphorylation of P, which leads to down-regulation of viral transcription/ replication. Participates, together with N, in the formation of viral factories (viroplasms), which are large inclusions in the host cytoplasm where replication takes place. The chain is Phosphoprotein (P/V) from Measles virus (strain Edmonston) (MeV).